The chain runs to 295 residues: UDP-N-acetylenolpyruvoylglucosamine reductase (295 aa).

The FAD-binding PCMH-type domain occupies 27 to 194 (GVGGEAEVWF…TRVRLKLRRS (168 aa)). Arg174 is a catalytic residue. Cys221 acts as the Proton donor in catalysis. The active site involves Glu287.

The protein belongs to the MurB family. FAD serves as cofactor.

The protein resides in the cytoplasm. It carries out the reaction UDP-N-acetyl-alpha-D-muramate + NADP(+) = UDP-N-acetyl-3-O-(1-carboxyvinyl)-alpha-D-glucosamine + NADPH + H(+). Its pathway is cell wall biogenesis; peptidoglycan biosynthesis. In terms of biological role, cell wall formation. The polypeptide is UDP-N-acetylenolpyruvoylglucosamine reductase (Deinococcus geothermalis (strain DSM 11300 / CIP 105573 / AG-3a)).